Reading from the N-terminus, the 648-residue chain is Acetyl-coenzyme A synthetase (648 aa).

Residues 191–194, Thr-310, and Asn-334 each bind CoA; that span reads RGGR. Residues 386–388, 410–415, Asp-499, and Arg-514 contribute to the ATP site; these read GEP and DTWWQT. A CoA-binding site is contributed by Ser-522. Arg-525 is an ATP binding site. Positions 536, 538, and 541 each coordinate Mg(2+). Arg-583 serves as a coordination point for CoA. N6-acetyllysine is present on Lys-608.

Belongs to the ATP-dependent AMP-binding enzyme family. Requires Mg(2+) as cofactor. Post-translationally, acetylated. Deacetylation by the SIR2-homolog deacetylase activates the enzyme.

The enzyme catalyses acetate + ATP + CoA = acetyl-CoA + AMP + diphosphate. In terms of biological role, catalyzes the conversion of acetate into acetyl-CoA (AcCoA), an essential intermediate at the junction of anabolic and catabolic pathways. AcsA undergoes a two-step reaction. In the first half reaction, AcsA combines acetate with ATP to form acetyl-adenylate (AcAMP) intermediate. In the second half reaction, it can then transfer the acetyl group from AcAMP to the sulfhydryl group of CoA, forming the product AcCoA. The polypeptide is Acetyl-coenzyme A synthetase (Aeromonas salmonicida (strain A449)).